Here is a 321-residue protein sequence, read N- to C-terminus: Hydrolase 3 (321 aa).

The Involved in the stabilization of the negatively charged intermediate by the formation of the oxyanion hole signature appears at 80 to 82 (HGA). Active-site residues include Ser172 and Asp267.

It belongs to the 'GDXG' lipolytic enzyme family.

The catalysed reaction is dihydroprecondylocarpine acetate + NADPH = (+)-vincadifformine + acetate + NADP(+). Its pathway is alkaloid biosynthesis. Component of the seco-iridoid and derivatives monoterpenoid indole alkaloids (MIAs, e.g. vincadifformine) biosynthesis pathway. Catalyzes the conversion of O-acetylstemmadenine (OAS) to vincadifformine. May also trigger the formation of additional unknown MIAs. This is Hydrolase 3 from Catharanthus roseus (Madagascar periwinkle).